The sequence spans 802 residues: MNFGSLFDNTPGGGSTGARLLSGLSYGNHTAATNVLPGGAMAQAAAAASLFSPPLTKSVYASSGLSLALEQPERGTNRGEASMRNNNNVGGGGDTFDGSVNRRSREEEHESRSGSDNVEGISGEDQDAADKPPRKKRYHRHTPQQIQELESMFKECPHPDEKQRLELSKRLCLETRQVKFWFQNRRTQMKTQLERHENALLRQENDKLRAENMSIREAMRNPICTNCGGPAMLGDVSLEEHHLRIENARLKDELDRVCNLTGKFLGHHHNHHYNSSLELAVGTNNNGGHFAFPPDFGGGGGCLPPQQQQSTVINGIDQKSVLLELALTAMDELVKLAQSEEPLWVKSLDGERDELNQDEYMRTFSSTKPTGLATEASRTSGMVIINSLALVETLMDSNRWTEMFPCNVARATTTDVISGGMAGTINGALQLMNAELQVLSPLVPVRNVNFLRFCKQHAEGVWAVVDVSIDPVRENSGGAPVIRRLPSGCVVQDVSNGYSKVTWVEHAEYDENQIHQLYRPLLRSGLGFGSQRWLATLQRQCECLAILISSSVTSHDNTSITPGGRKSMLKLAQRMTFNFCSGISAPSVHNWSKLTVGNVDPDVRVMTRKSVDDPGEPPGIVLSAATSVWLPAAPQRLYDFLRNERMRCEWDILSNGGPMQEMAHITKGQDQGVSLLRSNAMNANQSSMLILQETCIDASGALVVYAPVDIPAMHVVMNGGDSSYVALLPSGFAVLPDGGIDGGGSGDGDQRPVGGGSLLTVAFQILVNNLPTAKLTVESVETVNNLISCTVQKIRAALQCES.

Residues 71–143 (QPERGTNRGE…RKKRYHRHTP (73 aa)) are disordered. A compositionally biased stretch (basic and acidic residues) spans 103-113 (RSREEEHESRS). Residues 133–142 (PRKKRYHRHT) show a composition bias toward basic residues. A DNA-binding region (homeobox) is located at residues 134 to 193 (RKKRYHRHTPQQIQELESMFKECPHPDEKQRLELSKRLCLETRQVKFWFQNRRTQMKTQL). The stretch at 182-221 (FQNRRTQMKTQLERHENALLRQENDKLRAENMSIREAMRN) forms a coiled coil. The 232-residue stretch at 315–546 (GIDQKSVLLE…LQRQCECLAI (232 aa)) folds into the START domain.

It belongs to the HD-ZIP homeobox family. Class IV subfamily. Interacts with AIL7/PLT7, ANT, BBM and AIL1. In terms of tissue distribution, expressed in roots, stems, leaves and floral buds.

It localises to the nucleus. In terms of biological role, probable transcription factor involved in the regulation of the tissue-specific accumulation of anthocyanins and in cellular organization of the primary root. This is Homeobox-leucine zipper protein ANTHOCYANINLESS 2 from Arabidopsis thaliana (Mouse-ear cress).